Here is a 239-residue protein sequence, read N- to C-terminus: Ribosomal RNA small subunit methyltransferase G (239 aa).

S-adenosyl-L-methionine-binding positions include Gly-78, Phe-83, 129–130, and Arg-148; that span reads AE.

It belongs to the methyltransferase superfamily. RNA methyltransferase RsmG family.

The protein resides in the cytoplasm. Functionally, specifically methylates the N7 position of a guanine in 16S rRNA. The chain is Ribosomal RNA small subunit methyltransferase G from Clostridium tetani (strain Massachusetts / E88).